The following is a 308-amino-acid chain: tRNA pseudouridine synthase B (308 aa).

Asp-47 serves as the catalytic Nucleophile.

The protein belongs to the pseudouridine synthase TruB family. Type 1 subfamily.

It carries out the reaction uridine(55) in tRNA = pseudouridine(55) in tRNA. In terms of biological role, responsible for synthesis of pseudouridine from uracil-55 in the psi GC loop of transfer RNAs. In Rhodospirillum rubrum (strain ATCC 11170 / ATH 1.1.1 / DSM 467 / LMG 4362 / NCIMB 8255 / S1), this protein is tRNA pseudouridine synthase B.